Reading from the N-terminus, the 64-residue chain is Large ribosomal subunit protein uL29 (64 aa).

The protein belongs to the universal ribosomal protein uL29 family.

This Levilactobacillus brevis (strain ATCC 367 / BCRC 12310 / CIP 105137 / JCM 1170 / LMG 11437 / NCIMB 947 / NCTC 947) (Lactobacillus brevis) protein is Large ribosomal subunit protein uL29.